Reading from the N-terminus, the 143-residue chain is Hemoglobin subunit alpha (143 aa).

S2 carries the N-acetylserine modification. One can recognise a Globin domain in the interval 2-143 (SLSDKDKAAV…LALALSEKYR (142 aa)). H60 contacts O2. H89 lines the heme b pocket.

The protein belongs to the globin family. Heterotetramer of two alpha chains and two beta chains. In terms of tissue distribution, red blood cells.

Its function is as follows. Involved in oxygen transport from gills to the various peripheral tissues. This chain is Hemoglobin subunit alpha (hba), found in Cyprinus carpio (Common carp).